Reading from the N-terminus, the 464-residue chain is IAA-amino acid hydrolase ILR1-like 6 (464 aa).

An N-terminal signal peptide occupies residues 1 to 24 (MDNLRKLNLLSVSLTIIFVSLTIA). 5 residues coordinate Mn(2+): Cys-175, His-177, Glu-211, His-235, and His-433.

It belongs to the peptidase M20 family.

The catalysed reaction is a jasmonyl-L-amino acid + H2O = a jasmonate + an L-alpha-amino acid. Its function is as follows. Hydrolyzes certain amino acid conjugates of the plant growth regulator indole-3-acetic acid (IAA). Also hydrolyzes amino acid conjugates of jasmonic acid and 12-hydroxy jasmonic acid. This Arabidopsis thaliana (Mouse-ear cress) protein is IAA-amino acid hydrolase ILR1-like 6.